The sequence spans 456 residues: GTPase Der (456 aa).

EngA-type G domains lie at 4 to 169 and 178 to 353; these read PVVA…PSKD and VQLA…DQSR. GTP is bound by residues 10–17, 57–61, 120–123, 184–191, 231–235, and 296–299; these read GRPNVGKS, DTGGL, NKCE, DTAGI, and NKWD. The 86-residue stretch at 354–439 folds into the KH-like domain; it reads RRVTTSVVNE…PIKLFWRGKQ (86 aa).

The protein belongs to the TRAFAC class TrmE-Era-EngA-EngB-Septin-like GTPase superfamily. EngA (Der) GTPase family. Associates with the 50S ribosomal subunit.

GTPase that plays an essential role in the late steps of ribosome biogenesis. The sequence is that of GTPase Der from Prochlorococcus marinus (strain NATL1A).